Here is a 358-residue protein sequence, read N- to C-terminus: Phospho-N-acetylmuramoyl-pentapeptide-transferase (358 aa).

10 helical membrane-spanning segments follow: residues 3–23, 54–74, 84–104, 114–134, 156–176, 187–207, 231–251, 255–275, 283–303, and 330–350; these read QILF…PALI, GVAI…IGIA, ALLV…DDFI, LTAA…GVLA, ITTV…VVVA, LDGL…IITF, LALV…WNAA, IFMG…LSIT, VVIG…VAVF, and VIIR…GLFY.

The protein belongs to the glycosyltransferase 4 family. MraY subfamily. Mg(2+) is required as a cofactor.

It localises to the cell membrane. It catalyses the reaction UDP-N-acetyl-alpha-D-muramoyl-L-alanyl-gamma-D-glutamyl-meso-2,6-diaminopimeloyl-D-alanyl-D-alanine + di-trans,octa-cis-undecaprenyl phosphate = di-trans,octa-cis-undecaprenyl diphospho-N-acetyl-alpha-D-muramoyl-L-alanyl-D-glutamyl-meso-2,6-diaminopimeloyl-D-alanyl-D-alanine + UMP. The protein operates within cell wall biogenesis; peptidoglycan biosynthesis. Catalyzes the initial step of the lipid cycle reactions in the biosynthesis of the cell wall peptidoglycan: transfers peptidoglycan precursor phospho-MurNAc-pentapeptide from UDP-MurNAc-pentapeptide onto the lipid carrier undecaprenyl phosphate, yielding undecaprenyl-pyrophosphoryl-MurNAc-pentapeptide, known as lipid I. This is Phospho-N-acetylmuramoyl-pentapeptide-transferase from Nocardia farcinica (strain IFM 10152).